The chain runs to 23 residues: Hongotoxin-4 (23 aa).

It belongs to the short scorpion toxin superfamily. Potassium channel inhibitor family. Alpha-KTx 02 subfamily. As to expression, expressed by the venom gland.

It localises to the secreted. Potent selective inhibitor of Kv1/KCNA voltage-gated potassium channels. This chain is Hongotoxin-4, found in Centruroides limbatus (Bark scorpion).